A 272-amino-acid polypeptide reads, in one-letter code: Small ribosomal subunit protein mS23 (272 aa).

The disordered stretch occupies residues 236 to 272 (AGATGGAKEESDPAILPELEVAESTSESAQPAEIRTG).

The protein belongs to the mitochondrion-specific ribosomal protein mS23 family. As to quaternary structure, component of the mitochondrial small ribosomal subunit.

Its subcellular location is the mitochondrion. The protein is Small ribosomal subunit protein mS23 (RSM25) of Coccidioides immitis (strain RS) (Valley fever fungus).